A 431-amino-acid polypeptide reads, in one-letter code: Serine/threonine-protein kinase Sgk1 (431 aa).

The tract at residues 1-60 (MTVKTEAARGPLTYSRMRGMVAILIAFMKQRRMGLNDFIQKIANNSYACKHTEVQSILKI) is necessary for localization to the mitochondria. The disordered stretch occupies residues 66 to 92 (PELMNANPSPPPSPSQQINLGPSSNPH). A Phosphoserine modification is found at Ser74. Ser78 carries the post-translational modification Phosphoserine; by MAPK7. The span at 81 to 91 (QQINLGPSSNP) shows a compositional bias: polar residues. Residues 98–355 (FHFLKVIGKG…FMEIRNHVFF (258 aa)) form the Protein kinase domain. Residues 104 to 112 (IGKGSFGKV) and Lys127 contribute to the ATP site. Positions 131-141 (KKAILKKKEEK) match the Nuclear localization signal motif. Asp222 acts as the Proton acceptor in catalysis. Residue Thr256 is modified to Phosphothreonine; by PDPK1. The region spanning 356 to 431 (SLINWDDLIN…SYAPPMDSFL (76 aa)) is the AGC-kinase C-terminal domain. Position 369 is a phosphothreonine; by PKA (Thr369). Ser397, Ser401, and Ser422 each carry phosphoserine.

This sequence belongs to the protein kinase superfamily. AGC Ser/Thr protein kinase family. In terms of assembly, homodimer; disulfide-linked. Forms a trimeric complex with FBXW7 and NOTCH1. Interacts with MAPK3/ERK1, MAPK1/ERK2, MAP2K1/MEK1, MAP2K2/MEK2, NEDD4, NEDD4L, MAPT/TAU, MAPK7, CREB1, SLC9A3R2/NHERF2 and KCNJ1/ROMK1. Associates with the mammalian target of rapamycin complex 2 (mTORC2) via an interaction with MAPKAP1/SIN1. Post-translationally, regulated by phosphorylation. Activated by phosphorylation on Ser-422 by mTORC2, transforming it into a substrate for PDPK1 which phosphorylates it on Thr-256. Phosphorylation on Ser-397 and Ser-401 are also essential for its activity. Phosphorylation on Ser-78 by MAPK7 is required for growth factor-induced cell cycle progression. Ubiquitinated by NEDD4L; which promotes proteasomal degradation. Ubiquitinated by SYVN1 at the endoplasmic reticulum; which promotes rapid proteasomal degradation and maintains a high turnover rate in resting cells.

The protein resides in the cytoplasm. Its subcellular location is the nucleus. The protein localises to the endoplasmic reticulum membrane. It localises to the cell membrane. It is found in the mitochondrion. The catalysed reaction is L-seryl-[protein] + ATP = O-phospho-L-seryl-[protein] + ADP + H(+). The enzyme catalyses L-threonyl-[protein] + ATP = O-phospho-L-threonyl-[protein] + ADP + H(+). Two specific sites, one in the kinase domain (Thr-256) and the other in the C-terminal regulatory region (Ser-422), need to be phosphorylated for its full activation. Phosphorylation at Ser-397 and Ser-401 are also essential for its activity. Activated by WNK1, WNK2, WNK3 and WNK4; which promote phosphorylation by mTORC2. Its function is as follows. Serine/threonine-protein kinase which is involved in the regulation of a wide variety of ion channels, membrane transporters, cellular enzymes, transcription factors, neuronal excitability, cell growth, proliferation, survival, migration and apoptosis. Plays an important role in cellular stress response. Contributes to regulation of renal Na(+) retention, renal K(+) elimination, salt appetite, gastric acid secretion, intestinal Na(+)/H(+) exchange and nutrient transport, insulin-dependent salt sensitivity of blood pressure, salt sensitivity of peripheral glucose uptake, cardiac repolarization and memory consolidation. Up-regulates Na(+) channels: SCNN1A/ENAC, SCN5A and ASIC1/ACCN2, K(+) channels: KCNJ1/ROMK1, KCNA1-5, KCNQ1-5 and KCNE1, epithelial Ca(2+) channels: TRPV5 and TRPV6, chloride channels: BSND, CLCN2 and CFTR, glutamate transporters: SLC1A3/EAAT1, SLC1A2 /EAAT2, SLC1A1/EAAT3, SLC1A6/EAAT4 and SLC1A7/EAAT5, amino acid transporters: SLC1A5/ASCT2, SLC38A1/SN1 and SLC6A19, creatine transporter: SLC6A8, Na(+)/dicarboxylate cotransporter: SLC13A2/NADC1, Na(+)-dependent phosphate cotransporter: SLC34A2/NAPI-2B, glutamate receptor: GRIK2/GLUR6. Up-regulates carriers: SLC9A3/NHE3, SLC12A1/NKCC2, SLC12A3/NCC, SLC5A3/SMIT, SLC2A1/GLUT1, SLC5A1/SGLT1 and SLC15A2/PEPT2. Regulates enzymes: GSK3A/B, PMM2 and Na(+)/K(+) ATPase, and transcription factors: CTNNB1 and nuclear factor NF-kappa-B. Stimulates sodium transport into epithelial cells by enhancing the stability and expression of SCNN1A/ENAC. This is achieved by phosphorylating the NEDD4L ubiquitin E3 ligase, promoting its interaction with 14-3-3 proteins, thereby preventing it from binding to SCNN1A/ENAC and targeting it for degradation. Regulates store-operated Ca(+2) entry (SOCE) by stimulating ORAI1 and STIM1. Regulates KCNJ1/ROMK1 directly via its phosphorylation or indirectly via increased interaction with SLC9A3R2/NHERF2. Phosphorylates MDM2 and activates MDM2-dependent ubiquitination of p53/TP53. Phosphorylates MAPT/TAU and mediates microtubule depolymerization and neurite formation in hippocampal neurons. Phosphorylates SLC2A4/GLUT4 and up-regulates its activity. Phosphorylates APBB1/FE65 and promotes its localization to the nucleus. Phosphorylates MAPK1/ERK2 and activates it by enhancing its interaction with MAP2K1/MEK1 and MAP2K2/MEK2. Phosphorylates FBXW7 and plays an inhibitory role in the NOTCH1 signaling. Phosphorylates FOXO1 resulting in its relocalization from the nucleus to the cytoplasm. Phosphorylates FOXO3, promoting its exit from the nucleus and interference with FOXO3-dependent transcription. Phosphorylates BRAF and MAP3K3/MEKK3 and inhibits their activity. Phosphorylates SLC9A3/NHE3 in response to dexamethasone, resulting in its activation and increased localization at the cell membrane. Phosphorylates CREB1. Necessary for vascular remodeling during angiogenesis. This Oryctolagus cuniculus (Rabbit) protein is Serine/threonine-protein kinase Sgk1 (SGK1).